Consider the following 460-residue polypeptide: tRNA (guanine(10)-N(2))-methyltransferase TRMT11 (460 aa).

Ala2 carries the N-acetylalanine modification.

Belongs to the class I-like SAM-binding methyltransferase superfamily. TRM11 methyltransferase family. In terms of assembly, part of the heterodimeric TRMT11-TRM112 methyltransferase complex; this complex forms an active tRNA methyltransferase, where TRMT112 acts as an activator of the catalytic subunit TRMT11.

It localises to the cytoplasm. It catalyses the reaction guanosine(10) in tRNA + S-adenosyl-L-methionine = N(2)-methylguanosine(10) in tRNA + S-adenosyl-L-homocysteine + H(+). Its function is as follows. Catalytic subunit of the TRMT11-TRM112 methyltransferase complex, that specifically mediates the S-adenosyl-L-methionine-dependent N(2)-methylation of guanosine nucleotide at position 10 (m2G10) in tRNAs. This is one of the major tRNA (guanine-N(2))-methyltransferases. The polypeptide is tRNA (guanine(10)-N(2))-methyltransferase TRMT11 (Bos taurus (Bovine)).